Consider the following 375-residue polypeptide: Chaperone protein DnaJ (375 aa).

One can recognise a J domain in the interval 5–70; that stretch reads DFYETLGVAK…QKRAAYDRYG (66 aa). Residues 136–214 form a CR-type zinc finger; that stretch reads GKTAQIRVPT…CHGQGRVTEE (79 aa). Zn(2+)-binding residues include Cys-149, Cys-152, Cys-166, Cys-169, Cys-188, Cys-191, Cys-202, and Cys-205. 4 CXXCXGXG motif repeats span residues 149–156, 166–173, 188–195, and 202–209; these read CDVCSGSG, CGTCQGTG, CPTCHGRG, and CPKCHGQG.

It belongs to the DnaJ family. Homodimer. Requires Zn(2+) as cofactor.

It is found in the cytoplasm. Participates actively in the response to hyperosmotic and heat shock by preventing the aggregation of stress-denatured proteins and by disaggregating proteins, also in an autonomous, DnaK-independent fashion. Unfolded proteins bind initially to DnaJ; upon interaction with the DnaJ-bound protein, DnaK hydrolyzes its bound ATP, resulting in the formation of a stable complex. GrpE releases ADP from DnaK; ATP binding to DnaK triggers the release of the substrate protein, thus completing the reaction cycle. Several rounds of ATP-dependent interactions between DnaJ, DnaK and GrpE are required for fully efficient folding. Also involved, together with DnaK and GrpE, in the DNA replication of plasmids through activation of initiation proteins. The chain is Chaperone protein DnaJ from Rhizobium johnstonii (strain DSM 114642 / LMG 32736 / 3841) (Rhizobium leguminosarum bv. viciae).